The chain runs to 338 residues: MGTDIGDLLQKRKIELSDLTNQVVAIDAFNTLHQFLSIIRQRDGNPLVNSRGKVTSHLSGLLYRTASLIEVGIKPVFIFDGKPPDLKSETLNRRKEVRESSLEKWENAKVEGDLEAAYKYAQASSKVDQEIVEDSKYLLSIMGIPWIQAPCEGEAQAAHMVLKKDADYVASQDYDSFLFGAPTVIRNLAVTGKRKLPGKHVYVDVELELIELEETLGVLGINREQLIDIAICVGTDFNKGLEKVGPKTALKLIKKHGDIHAVLREKGVEIKELDRIRELFTHPDVTDDYEIKWGKPDSEKLIKFLCKENDFSVDRVKKAVERLKVVSRGRQQTLDQWF.

The tract at residues 1 to 98 (MGTDIGDLLQ…ETLNRRKEVR (98 aa)) is N-domain. Mg(2+) contacts are provided by D27, D80, E152, E154, D173, D175, and D236. The segment at 116–257 (AAYKYAQASS…TALKLIKKHG (142 aa)) is I-domain. Positions 330-338 (RQQTLDQWF) are interaction with PCNA.

The protein belongs to the XPG/RAD2 endonuclease family. FEN1 subfamily. Interacts with PCNA. PCNA stimulates the nuclease activity without altering cleavage specificity. Requires Mg(2+) as cofactor.

Its function is as follows. Structure-specific nuclease with 5'-flap endonuclease and 5'-3' exonuclease activities involved in DNA replication and repair. During DNA replication, cleaves the 5'-overhanging flap structure that is generated by displacement synthesis when DNA polymerase encounters the 5'-end of a downstream Okazaki fragment. Binds the unpaired 3'-DNA end and kinks the DNA to facilitate 5' cleavage specificity. Cleaves one nucleotide into the double-stranded DNA from the junction in flap DNA, leaving a nick for ligation. Also involved in the base excision repair (BER) pathway. Acts as a genome stabilization factor that prevents flaps from equilibrating into structures that lead to duplications and deletions. Also possesses 5'-3' exonuclease activity on nicked or gapped double-stranded DNA. The chain is Flap endonuclease 1 from Methanosarcina barkeri (strain Fusaro / DSM 804).